The following is a 570-amino-acid chain: Ferroportin (570 aa).

Residues 1-23 (MTKSRDQTHQEGCCGSLANYLTS) are Cytoplasmic-facing. A helical membrane pass occupies residues 24-53 (AKFLLYLGHSLSTWGDRMWHFAVSVFLVEL). Residues Asp-39 and His-43 each contribute to the Fe cation site. Topologically, residues 54–57 (YGNS) are extracellular. A helical membrane pass occupies residues 58–84 (LLLTAVYGLVVAGSVLVLGAIIGDWVD). The Cytoplasmic segment spans residues 85-87 (KNA). The helical transmembrane segment at 88 to 118 (RLKVAQTSLVVQNVSVILCGIILMMVFLHKN) threads the bilayer. Over 119–126 (ELLNMYHG) the chain is Extracellular. A helical membrane pass occupies residues 127-162 (WVLTVCYILIITIANIANLASTATAITIQRDWIVVV). At 163–164 (AG) the chain is on the cytoplasmic side. A helical transmembrane segment spans residues 165-195 (ENRSRLADMNATIRRIDQLTNILAPMAVGQI). Residues 196 to 202 (MTFGSPV) are Extracellular-facing. The chain crosses the membrane as a helical span at residues 203 to 229 (IGCGFISGWNLVSMCVEYFLLWKVYQK). At 230–306 (TPALAVKAAL…DGWVSYYNQP (77 aa)) the chain is on the cytoplasmic side. The chain crosses the membrane as a helical span at residues 307 to 333 (VFLAGMGLAFLYMTVLGFDCITTGYAY). Position 326 (Cys-326) interacts with Fe cation. The Extracellular portion of the chain corresponds to 334-338 (TQGLS). A helical transmembrane segment spans residues 339 to 366 (GSILSVLMGASAITGIMGTVAFTWLRRK). Residues 367–368 (CG) lie on the Cytoplasmic side of the membrane. The chain crosses the membrane as a helical span at residues 369–391 (LVRTGLFSGLAQLSCLILCVISV). At 392 to 452 (FMPGSPLDLS…EMSTKSVPII (61 aa)) the chain is on the extracellular side. The chain crosses the membrane as a helical span at residues 453 to 482 (SVSLLFAGVIAARIGLWSFDLTVTQLLQEN). The Cytoplasmic segment spans residues 483–487 (VIESE). Residues 488 to 512 (RGIINGVQNSMNYLLDLLHFIMVIL) traverse the membrane as a helical segment. His-506 is a Fe cation binding site. At 513-515 (APN) the chain is on the extracellular side. The chain crosses the membrane as a helical span at residues 516 to 541 (PEAFGLLVLISVSFVAMGHLMYFRFA). Over 542–570 (QKTLGNQIFVCAPDEKEVTDESQPNTSVV) the chain is Cytoplasmic.

Belongs to the ferroportin (FP) (TC 2.A.100) family. SLC40A subfamily. In terms of assembly, identified in a complex with STOM. Interacts with HAMP; affinity of the peptide hormone HAMP for SLC40A1 increases by 80-fold in the presence of iron and the interaction promotes SLC40A1 ubiquitination and degradation. Part of a complex composed of SLC40A1/ferroportin, TF/transferrin and HEPH/hephaestin that transfers iron from cells to transferrin. Post-translationally, polyubiquitinated by RNF217; leading to proteasomal degradation. Under conditions of high systemic iron levels, both the hormone peptide hepcidin/HAMP and holo(iron bound)-transferrin/TF induce the ubiquitination, internalization and proteasomal degradation of SLC40A1 to control iron release from cells.

It is found in the cell membrane. Its subcellular location is the basolateral cell membrane. The catalysed reaction is Fe(2+)(in) = Fe(2+)(out). With respect to regulation, during elevated serum iron levels, liver-derived hepcidin/HAMP negatively regulates cell surface SLC40A1 by inducing its ubiquitination, internalization, and degradation. Indeed, hepcidin/HAMP affinity towards ferroportin/SLC40A1 increases by 80-fold in the presence of iron. In terms of biological role, transports Fe(2+) from the inside of a cell to the outside of the cell, playing a key role for maintaining systemic iron homeostasis. Transports iron from intestinal, splenic, hepatic cells, macrophages and erythrocytes into the blood to provide iron to other tissues. Controls therefore dietary iron uptake, iron recycling by macrophages and erythrocytes, and release of iron stores in hepatocytes. When iron is in excess in serum, circulating HAMP/hepcidin levels increase resulting in a degradation of SLC40A1, thus limiting the iron efflux to plasma. The polypeptide is Ferroportin (Rattus norvegicus (Rat)).